The sequence spans 349 residues: Phosphoribosylformylglycinamidine cyclo-ligase (349 aa).

This sequence belongs to the AIR synthase family.

It is found in the cytoplasm. The catalysed reaction is 2-formamido-N(1)-(5-O-phospho-beta-D-ribosyl)acetamidine + ATP = 5-amino-1-(5-phospho-beta-D-ribosyl)imidazole + ADP + phosphate + H(+). It participates in purine metabolism; IMP biosynthesis via de novo pathway; 5-amino-1-(5-phospho-D-ribosyl)imidazole from N(2)-formyl-N(1)-(5-phospho-D-ribosyl)glycinamide: step 2/2. This Methanococcus maripaludis (strain C7 / ATCC BAA-1331) protein is Phosphoribosylformylglycinamidine cyclo-ligase.